Consider the following 639-residue polypeptide: Transcription factor phomR' (639 aa).

Residues 14 to 41 (CWTCRLRRKKCNEGGPPCDNCEARGIHC) constitute a DNA-binding region (zn(2)-C6 fungal-type). 2 disordered regions span residues 58–136 (REEA…AGTG) and 476–499 (LPRS…TGPE). Low complexity predominate over residues 68-108 (SGRGRSYSRSSSTAAAAAPKPAEGAMVTGGSSSSSRGSGSS).

The protein localises to the nucleus. In terms of biological role, transcription factor; part of the gene cluster that mediates the biosynthesis of the phomopsins, a group of hexapeptide mycotoxins which infects lupins and causes lupinosis disease in livestock. May play a role in the regulation of the production of phomopsins. The sequence is that of Transcription factor phomR' from Diaporthe leptostromiformis (Lupinosis disease fungus).